A 993-amino-acid chain; its full sequence is Ephrin type-B receptor 3 (993 aa).

The signal sequence occupies residues 1-29 (MAGARPPPGLLPLLAPLLLPLLLPAGCWA). Over 30–554 (LEETLMDTKW…AQQLQEQLPL (525 aa)) the chain is Extracellular. Residues 31–209 (EETLMDTKWV…FYKKCASTTA (179 aa)) enclose the Eph LBD domain. Cys73 and Cys191 are oxidised to a cystine. 2 consecutive Fibronectin type-III domains span residues 331-446 (VPSP…TNQA) and 447-540 (APSE…TTSE). Asn343 and Asn440 each carry an N-linked (GlcNAc...) asparagine glycan. Residues 555–575 (IVGSTVAGFVFMVVVVVIALV) traverse the membrane as a helical segment. Residues 576–993 (CLRKQRHGPD…QMNQTLPVQV (418 aa)) are Cytoplasmic-facing. Tyr609 bears the Phosphotyrosine; by autocatalysis mark. The Protein kinase domain occupies 628 to 891 (VKIEEVIGAG…QIVNTLDKLI (264 aa)). ATP is bound by residues 634 to 642 (IGAGEFGEV) and Lys660. The Proton acceptor role is filled by Asp753. An SAM domain is found at 920–984 (TTFTTVGDWL…LCSIQDMRLQ (65 aa)). Positions 991–993 (VQV) match the PDZ-binding motif.

It belongs to the protein kinase superfamily. Tyr protein kinase family. Ephrin receptor subfamily. In terms of assembly, heterotetramer upon binding of the ligand. The heterotetramer is composed of an ephrin dimer and a receptor dimer. Oligomerization is probably required to induce biological responses. Phosphorylated. Autophosphorylates upon ligand-binding. Autophosphorylation on Tyr-609 is required for interaction with SH2 domain-containing proteins. Post-translationally, ubiquitinated by RNF186, mainly through 'Lys-48' and 'Lys-63'-linked polyubiquitin chains. Expressed in cells of the retinal ganglion cell layer during retinal axon guidance to the optic disk. Expressed by Paneth and progenitor cells in the crypts of the intestinal epithelium (at protein level). Expressed in myogenic progenitor cells.

The protein resides in the cell membrane. Its subcellular location is the cell projection. The protein localises to the dendrite. The enzyme catalyses L-tyrosyl-[protein] + ATP = O-phospho-L-tyrosyl-[protein] + ADP + H(+). In terms of biological role, receptor tyrosine kinase which binds promiscuously transmembrane ephrin-B family ligands residing on adjacent cells, leading to contact-dependent bidirectional signaling into neighboring cells. The signaling pathway downstream of the receptor is referred to as forward signaling while the signaling pathway downstream of the ephrin ligand is referred to as reverse signaling. Generally has an overlapping and redundant function with EPHB2. Like EPHB2, functions in axon guidance during development regulating for instance the neurons forming the corpus callosum and the anterior commissure, 2 major interhemispheric connections between the temporal lobes of the cerebral cortex. In addition to its role in axon guidance also plays an important redundant role with other ephrin-B receptors in development and maturation of dendritic spines and the formation of excitatory synapses. Controls other aspects of development through regulation of cell migration and positioning. This includes angiogenesis, palate development and thymic epithelium development for instance. Forward and reverse signaling through the EFNB2/EPHB3 complex also regulate migration and adhesion of cells that tubularize the urethra and septate the cloaca. Finally, plays an important role in intestinal epithelium differentiation segregating progenitor from differentiated cells in the crypt. The sequence is that of Ephrin type-B receptor 3 (Ephb3) from Mus musculus (Mouse).